The chain runs to 558 residues: Tyrosine N-monooxygenase (558 aa).

Residues 13–33 (VLAAPLLSSSAILKLLLFVVT) form a helical membrane-spanning segment. The interval 48–67 (TTKCSSTTCASPPAGVGNPP) is disordered. The segment covering 49 to 65 (TKCSSTTCASPPAGVGN) has biased composition (low complexity). The heme b site is built by Arg138, Arg167, His422, Arg491, and Cys493.

It belongs to the cytochrome P450 family. Heme b is required as a cofactor.

The protein resides in the endoplasmic reticulum membrane. It carries out the reaction L-tyrosine + 2 reduced [NADPH--hemoprotein reductase] + 2 O2 = (E)-4-hydroxyphenylacetaldehyde oxime + 2 oxidized [NADPH--hemoprotein reductase] + CO2 + 3 H2O + 2 H(+). It catalyses the reaction L-tyrosine + reduced [NADPH--hemoprotein reductase] + O2 = N-hydroxy-L-tyrosine + oxidized [NADPH--hemoprotein reductase] + H2O + 2 H(+). The enzyme catalyses N-hydroxy-L-tyrosine + reduced [NADPH--hemoprotein reductase] + O2 = N,N-dihydroxy-L-tyrosine + oxidized [NADPH--hemoprotein reductase] + H2O + H(+). The catalysed reaction is N,N-dihydroxy-L-tyrosine + H(+) = (E)-4-hydroxyphenylacetaldehyde oxime + CO2 + H2O. The protein operates within secondary metabolite biosynthesis; dhurrin biosynthesis; dhurrin from L-tyrosine: step 1/3. Cytochrome P450 involved in the biosynthesis of the cyanogenic glucoside dhurrin. Catalyzes the conversion of L-tyrosine to p-hydroxyphenylacetaldehyde oxime, via the N-hydroxy-L-tyrosine and N,N-dihydroxy-L-tyrosine intermediates. Produces the (E) isomer of the final oxime product. The chain is Tyrosine N-monooxygenase (CYP79A1) from Sorghum bicolor (Sorghum).